Here is an 810-residue protein sequence, read N- to C-terminus: DNA gyrase subunit A (810 aa).

The Topo IIA-type catalytic domain occupies 36–502 (LPDVRDGLKP…EVLKTSMSDL (467 aa)). Y124 serves as the catalytic O-(5'-phospho-DNA)-tyrosine intermediate. The tract at residues 499-810 (MSDLMQKENI…SLVSVSKFIK (312 aa)) is C-terminal domain. Positions 529–535 (QGTGGKG) match the GyrA-box motif.

It belongs to the type II topoisomerase GyrA/ParC subunit family. As to quaternary structure, heterotetramer, composed of two GyrA and two GyrB chains. In the heterotetramer, GyrA contains the active site tyrosine that forms a transient covalent intermediate with DNA, while GyrB binds cofactors and catalyzes ATP hydrolysis.

The protein localises to the cytoplasm. The enzyme catalyses ATP-dependent breakage, passage and rejoining of double-stranded DNA.. Functionally, a type II topoisomerase that negatively supercoils closed circular double-stranded (ds) DNA in an ATP-dependent manner to modulate DNA topology and maintain chromosomes in an underwound state. Negative supercoiling favors strand separation, and DNA replication, transcription, recombination and repair, all of which involve strand separation. Also able to catalyze the interconversion of other topological isomers of dsDNA rings, including catenanes and knotted rings. Type II topoisomerases break and join 2 DNA strands simultaneously in an ATP-dependent manner. The chain is DNA gyrase subunit A from Borreliella burgdorferi (strain ATCC 35210 / DSM 4680 / CIP 102532 / B31) (Borrelia burgdorferi).